We begin with the raw amino-acid sequence, 297 residues long: N-acetylmuramic acid 6-phosphate etherase (297 aa).

In terms of domain architecture, SIS spans 56–219; sequence AIEAFNKGGR…STISMIGIGK (164 aa). Catalysis depends on Glu84, which acts as the Proton donor. The active site involves Glu115.

This sequence belongs to the GCKR-like family. MurNAc-6-P etherase subfamily. In terms of assembly, homodimer.

It carries out the reaction N-acetyl-D-muramate 6-phosphate + H2O = N-acetyl-D-glucosamine 6-phosphate + (R)-lactate. It functions in the pathway amino-sugar metabolism; N-acetylmuramate degradation. In terms of biological role, specifically catalyzes the cleavage of the D-lactyl ether substituent of MurNAc 6-phosphate, producing GlcNAc 6-phosphate and D-lactate. The chain is N-acetylmuramic acid 6-phosphate etherase from Lactococcus lactis subsp. cremoris (strain MG1363).